The sequence spans 712 residues: Ribosomal RNA large subunit methyltransferase K/L (712 aa).

The THUMP domain maps to 43–154; sequence TAYRCCLWTR…GEKGVLGLDM (112 aa).

This sequence belongs to the methyltransferase superfamily. RlmKL family.

Its subcellular location is the cytoplasm. The catalysed reaction is guanosine(2445) in 23S rRNA + S-adenosyl-L-methionine = N(2)-methylguanosine(2445) in 23S rRNA + S-adenosyl-L-homocysteine + H(+). It catalyses the reaction guanosine(2069) in 23S rRNA + S-adenosyl-L-methionine = N(2)-methylguanosine(2069) in 23S rRNA + S-adenosyl-L-homocysteine + H(+). In terms of biological role, specifically methylates the guanine in position 2445 (m2G2445) and the guanine in position 2069 (m7G2069) of 23S rRNA. The polypeptide is Ribosomal RNA large subunit methyltransferase K/L (Photobacterium profundum (strain SS9)).